Reading from the N-terminus, the 419-residue chain is Putative L-glutamine:3-amino-2,3-dideoxy-scyllo-inosose aminotransferase (419 aa).

The residue at position 199 (Lys-199) is an N6-(pyridoxal phosphate)lysine.

It belongs to the DegT/DnrJ/EryC1 family. L-glutamine:2-deoxy-scyllo-inosose/scyllo-inosose aminotransferase subfamily. Pyridoxal 5'-phosphate is required as a cofactor.

It carries out the reaction 3-amino-2,3-dideoxy-scyllo-inosose + L-glutamine = 2-deoxystreptamine + 2-oxoglutaramate. The protein operates within metabolic intermediate biosynthesis; 2-deoxystreptamine biosynthesis; 2-deoxystreptamine from D-glucose 6-phosphate: step 4/4. It functions in the pathway antibiotic biosynthesis; kanamycin biosynthesis. Its function is as follows. Catalyzes the transamination of 3-amino-2,3-dideoxy-scyllo-inosose (amino-DOI) into 2-deoxystreptamine (DOS). This is Putative L-glutamine:3-amino-2,3-dideoxy-scyllo-inosose aminotransferase (kanD) from Streptomyces kanamyceticus.